Consider the following 265-residue polypeptide: Thiazole synthase (265 aa).

Lys-106 functions as the Schiff-base intermediate with DXP in the catalytic mechanism. Residues Gly-167, 193–194 (AG), and 215–216 (NT) each bind 1-deoxy-D-xylulose 5-phosphate. The disordered stretch occupies residues 245-265 (GRIPRRARAEPSSPQLGLVGS).

This sequence belongs to the ThiG family. Homotetramer. Forms heterodimers with either ThiH or ThiS.

It is found in the cytoplasm. It catalyses the reaction [ThiS sulfur-carrier protein]-C-terminal-Gly-aminoethanethioate + 2-iminoacetate + 1-deoxy-D-xylulose 5-phosphate = [ThiS sulfur-carrier protein]-C-terminal Gly-Gly + 2-[(2R,5Z)-2-carboxy-4-methylthiazol-5(2H)-ylidene]ethyl phosphate + 2 H2O + H(+). It participates in cofactor biosynthesis; thiamine diphosphate biosynthesis. In terms of biological role, catalyzes the rearrangement of 1-deoxy-D-xylulose 5-phosphate (DXP) to produce the thiazole phosphate moiety of thiamine. Sulfur is provided by the thiocarboxylate moiety of the carrier protein ThiS. In vitro, sulfur can be provided by H(2)S. The chain is Thiazole synthase from Methylobacterium sp. (strain 4-46).